Reading from the N-terminus, the 342-residue chain is Pyrophosphate--fructose 6-phosphate 1-phosphotransferase (342 aa).

G10 is a binding site for diphosphate. Position 103 (E103) interacts with Mg(2+). Residues 126–128 (TID), R163, 170–172 (MGR), E222, R266, and 272–275 (HVQR) each bind substrate. The Proton acceptor role is filled by D128.

This sequence belongs to the phosphofructokinase type A (PFKA) family. Mixed-substrate PFK group III subfamily. Homodimer or homotetramer. Requires Mg(2+) as cofactor.

It is found in the cytoplasm. It carries out the reaction beta-D-fructose 6-phosphate + diphosphate = beta-D-fructose 1,6-bisphosphate + phosphate + H(+). Its pathway is carbohydrate degradation; glycolysis; D-glyceraldehyde 3-phosphate and glycerone phosphate from D-glucose: step 3/4. Non-allosteric. Catalyzes the phosphorylation of D-fructose 6-phosphate, the first committing step of glycolysis. Uses inorganic phosphate (PPi) as phosphoryl donor instead of ATP like common ATP-dependent phosphofructokinases (ATP-PFKs), which renders the reaction reversible, and can thus function both in glycolysis and gluconeogenesis. Consistently, PPi-PFK can replace the enzymes of both the forward (ATP-PFK) and reverse (fructose-bisphosphatase (FBPase)) reactions. The sequence is that of Pyrophosphate--fructose 6-phosphate 1-phosphotransferase from Streptomyces coelicolor (strain ATCC BAA-471 / A3(2) / M145).